We begin with the raw amino-acid sequence, 309 residues long: Porphobilinogen deaminase (309 aa).

C242 carries the S-(dipyrrolylmethanemethyl)cysteine modification.

This sequence belongs to the HMBS family. Monomer. It depends on dipyrromethane as a cofactor.

It carries out the reaction 4 porphobilinogen + H2O = hydroxymethylbilane + 4 NH4(+). It functions in the pathway porphyrin-containing compound metabolism; protoporphyrin-IX biosynthesis; coproporphyrinogen-III from 5-aminolevulinate: step 2/4. Functionally, tetrapolymerization of the monopyrrole PBG into the hydroxymethylbilane pre-uroporphyrinogen in several discrete steps. The chain is Porphobilinogen deaminase from Shewanella frigidimarina (strain NCIMB 400).